Here is a 197-residue protein sequence, read N- to C-terminus: Large ribosomal subunit protein bL25 (197 aa).

The protein belongs to the bacterial ribosomal protein bL25 family. CTC subfamily. In terms of assembly, part of the 50S ribosomal subunit; part of the 5S rRNA/L5/L18/L25 subcomplex. Contacts the 5S rRNA. Binds to the 5S rRNA independently of L5 and L18.

In terms of biological role, this is one of the proteins that binds to the 5S RNA in the ribosome where it forms part of the central protuberance. The sequence is that of Large ribosomal subunit protein bL25 from Citrifermentans bemidjiense (strain ATCC BAA-1014 / DSM 16622 / JCM 12645 / Bem) (Geobacter bemidjiensis).